Consider the following 377-residue polypeptide: NADH dehydrogenase [ubiquinone] 1 alpha subcomplex subunit 9, mitochondrial (377 aa).

The transit peptide at Met-1–Gln-35 directs the protein to the mitochondrion. An N6-succinyllysine modification is found at Lys-175. N6-acetyllysine is present on residues Lys-189 and Lys-370.

The protein belongs to the complex I NDUFA9 subunit family. As to quaternary structure, complex I is composed of 45 different subunits. This a component of the hydrophobic protein fraction. Interacts with BLOC1S1. Interacts with SLC2A4. Interacts with CLOCK. Interacts with RAB5IF. FAD is required as a cofactor. Post-translationally, acetylated on lysine residues. BLOC1S1 is required for acetylation. Acetylated by CLOCK in a circadian manner.

Its subcellular location is the mitochondrion matrix. In terms of biological role, accessory subunit of the mitochondrial membrane respiratory chain NADH dehydrogenase (Complex I), that is believed not to be involved in catalysis. Complex I functions in the transfer of electrons from NADH to the respiratory chain. The immediate electron acceptor for the enzyme is believed to be ubiquinone. The polypeptide is NADH dehydrogenase [ubiquinone] 1 alpha subcomplex subunit 9, mitochondrial (NDUFA9) (Pan troglodytes (Chimpanzee)).